Consider the following 229-residue polypeptide: MRCNHTLCVVAITFLVSWSQTLSTPVESRRTESPLVRSVSATEERNIFSQTAEAVAKWGTTTALLNLGKTDDEVKKILGLEKLSGEALKAHSNYHLLDDFITKLRDRKVTGWLHKDTTTDEVWKTLQLDDLFAKLDAKEFRHSDELKTYVQYVKKLDDDIWNYKRASFEPDSSSPLELAVKIHIWAKAKRPSWHVLEMMGNNALKGSKNRKFYREYLLLIKGKKPIIDF.

The N-terminal stretch at 1-23 (MRCNHTLCVVAITFLVSWSQTLS) is a signal peptide. Positions 34 to 45 (PLVRSVSATEER) match the RxLR-dEER motif.

Belongs to the RxLR effector family.

Its subcellular location is the secreted. It is found in the host nucleus. Its function is as follows. Secreted effector that acts as a RNA silencing suppressor, probably by inhibiting the biogenesis of small RNAs in the host plant, to manipulate host immune responses and promote Phytophthora infection. This chain is Secreted RxLR effector protein PITG_22926, found in Phytophthora infestans (strain T30-4) (Potato late blight agent).